The primary structure comprises 78 residues: TP53-regulated inhibitor of apoptosis 1-A (78 aa).

Residues 1–52 (MNSVGEECTDMKRDYDQCFNRWFAEKFLKGAGSGDPCTELFRRYRECVQKAI) are a coiled coil. One can recognise a CHCH domain in the interval 5–55 (GEECTDMKRDYDQCFNRWFAEKFLKGAGSGDPCTELFRRYRECVQKAIKDK). Short sequence motifs (cx9C motif) lie at residues 8–18 (CTDMKRDYDQC) and 37–47 (CTELFRRYREC). 2 disulfides stabilise this stretch: cysteine 8–cysteine 47 and cysteine 18–cysteine 37.

This sequence belongs to the TRIAP1/MDM35 family. As to quaternary structure, monomer. Forms a complex with prelid1 in the mitochondrion intermembrane space. Interacts with prelid3a.

It is found in the mitochondrion. It localises to the mitochondrion intermembrane space. The enzyme catalyses a 1,2-diacyl-sn-glycero-3-phosphate(in) = a 1,2-diacyl-sn-glycero-3-phosphate(out). Involved in the modulation of the mitochondrial apoptotic pathway by ensuring the accumulation of cardiolipin (CL) in mitochondrial membranes. The triap1:prelid1 complex probably functions as a phosphatidic acid (PA) transporter across the mitochondrion intermembrane space to provide PA for cardiolipin CL synthesis in the inner membrane. Likewise, the triap1:prelid3a complex mediates the transfer of phosphatidic acid (PA) between liposomes (in vitro) and probably functions as a PA transporter across the mitochondrion intermembrane space (in vivo). Mediates cell survival by inhibiting activation of caspase-9 which prevents induction of apoptosis. Required for pronephros development; probably involved at an early stage in the formation of pronephric components derived from the somatic layer. The protein is TP53-regulated inhibitor of apoptosis 1-A (triap1-a) of Xenopus laevis (African clawed frog).